Reading from the N-terminus, the 244-residue chain is Tyrosine recombinase XerD-like (244 aa).

One can recognise a Core-binding (CB) domain in the interval 1–73 (MRDRISAFLE…ACNQFLYFLY (73 aa)). Residues 90 to 244 (AEKKTEKPEI…KTVLTLEKYR (155 aa)) enclose the Tyr recombinase domain. Catalysis depends on residues K150 and R211. Y243 serves as the catalytic O-(3'-phospho-DNA)-tyrosine intermediate.

The protein belongs to the 'phage' integrase family. XerD-like subfamily.

The protein localises to the cytoplasm. In terms of biological role, putative tyrosine recombinase. Not involved in the cutting and rejoining of the recombining DNA molecules on dif(SL) site. The chain is Tyrosine recombinase XerD-like from Streptococcus pneumoniae (strain CGSP14).